A 713-amino-acid polypeptide reads, in one-letter code: Glutamine-dependent NAD(+) synthetase (713 aa).

Residues Val-4–Leu-275 enclose the CN hydrolase domain. Glu-44 functions as the Proton acceptor; for glutaminase activity in the catalytic mechanism. Lys-114 serves as the catalytic For glutaminase activity. Catalysis depends on Cys-175, which acts as the Nucleophile; for glutaminase activity. A ligase region spans residues Tyr-324 to Asn-703. Residue Pro-354–Ser-361 participates in ATP binding. Ser-356 is an active-site residue.

This sequence in the C-terminal section; belongs to the NAD synthetase family.

The enzyme catalyses deamido-NAD(+) + L-glutamine + ATP + H2O = L-glutamate + AMP + diphosphate + NAD(+) + H(+). The protein operates within cofactor biosynthesis; NAD(+) biosynthesis; NAD(+) from deamido-NAD(+) (L-Gln route): step 1/1. This Dictyostelium discoideum (Social amoeba) protein is Glutamine-dependent NAD(+) synthetase (nadsyn1).